The sequence spans 417 residues: Glutamyl-tRNA reductase (417 aa).

Substrate-binding positions include 49–52, Ser-109, 114–116, and Gln-120; these read TCNR and ESQ. Residue Cys-50 is the Nucleophile of the active site. 189 to 194 contacts NADP(+); it reads GLGEIG.

The protein belongs to the glutamyl-tRNA reductase family. Homodimer.

It carries out the reaction (S)-4-amino-5-oxopentanoate + tRNA(Glu) + NADP(+) = L-glutamyl-tRNA(Glu) + NADPH + H(+). Its pathway is porphyrin-containing compound metabolism; protoporphyrin-IX biosynthesis; 5-aminolevulinate from L-glutamyl-tRNA(Glu): step 1/2. Catalyzes the NADPH-dependent reduction of glutamyl-tRNA(Glu) to glutamate 1-semialdehyde (GSA). In Streptococcus sanguinis (strain SK36), this protein is Glutamyl-tRNA reductase.